The following is a 190-amino-acid chain: MVEINRKTKETDIKCKLNLDGCGKININTGVGFFDHMLEALSKHSGIDIDLTCSGDLHIDAHHTVEDCGIVLGQALKKAIFPISAVERYGNATVVMDEAATTCALDLSNRPFLVYEVNVSGKVGDFDVELVEEFFHAVAGNAGLTVHIIQDRGRNKHHILEASFKAFAVALRRALVKNEKLGIPSTKGVL.

This sequence belongs to the imidazoleglycerol-phosphate dehydratase family.

The protein localises to the cytoplasm. The catalysed reaction is D-erythro-1-(imidazol-4-yl)glycerol 3-phosphate = 3-(imidazol-4-yl)-2-oxopropyl phosphate + H2O. Its pathway is amino-acid biosynthesis; L-histidine biosynthesis; L-histidine from 5-phospho-alpha-D-ribose 1-diphosphate: step 6/9. This is Imidazoleglycerol-phosphate dehydratase from Aliarcobacter butzleri (strain RM4018) (Arcobacter butzleri).